We begin with the raw amino-acid sequence, 405 residues long: L-carnitine CoA-transferase (405 aa).

CoA contacts are provided by Lys97 and Arg104. Asp169 acts as the Nucleophile in catalysis.

The protein belongs to the CoA-transferase III family. CaiB subfamily. Homodimer.

Its subcellular location is the cytoplasm. It catalyses the reaction crotonobetainyl-CoA + (R)-carnitine = crotonobetaine + (R)-carnitinyl-CoA. It carries out the reaction 4-(trimethylamino)butanoyl-CoA + (R)-carnitine = (R)-carnitinyl-CoA + 4-(trimethylamino)butanoate. It participates in amine and polyamine metabolism; carnitine metabolism. In terms of biological role, catalyzes the reversible transfer of the CoA moiety from gamma-butyrobetainyl-CoA to L-carnitine to generate L-carnitinyl-CoA and gamma-butyrobetaine. Is also able to catalyze the reversible transfer of the CoA moiety from gamma-butyrobetainyl-CoA or L-carnitinyl-CoA to crotonobetaine to generate crotonobetainyl-CoA. The sequence is that of L-carnitine CoA-transferase from Escherichia coli O7:K1 (strain IAI39 / ExPEC).